The chain runs to 179 residues: Inorganic pyrophosphatase (179 aa).

Substrate contacts are provided by Lys30, Arg44, and Tyr56. Mg(2+) contacts are provided by Asp66, Asp71, and Asp103. Tyr143 lines the substrate pocket.

This sequence belongs to the PPase family. Homohexamer. Mg(2+) serves as cofactor.

The protein localises to the cytoplasm. It catalyses the reaction diphosphate + H2O = 2 phosphate + H(+). Functionally, catalyzes the hydrolysis of inorganic pyrophosphate (PPi) forming two phosphate ions. In Wigglesworthia glossinidia brevipalpis, this protein is Inorganic pyrophosphatase.